The following is a 306-amino-acid chain: Acetyl-coenzyme A carboxylase carboxyl transferase subunit beta (306 aa).

The 270-residue stretch at 27–296 folds into the CoA carboxyltransferase N-terminal domain; that stretch reads LWHKCPSCDA…PRFVAPVIEP (270 aa). Zn(2+)-binding residues include Cys-31, Cys-34, Cys-50, and Cys-53. A C4-type zinc finger spans residues 31-53; the sequence is CPSCDAVLYRPELEKTLDVCPKC.

This sequence belongs to the AccD/PCCB family. Acetyl-CoA carboxylase is a heterohexamer composed of biotin carboxyl carrier protein (AccB), biotin carboxylase (AccC) and two subunits each of ACCase subunit alpha (AccA) and ACCase subunit beta (AccD). It depends on Zn(2+) as a cofactor.

The protein resides in the cytoplasm. It catalyses the reaction N(6)-carboxybiotinyl-L-lysyl-[protein] + acetyl-CoA = N(6)-biotinyl-L-lysyl-[protein] + malonyl-CoA. The protein operates within lipid metabolism; malonyl-CoA biosynthesis; malonyl-CoA from acetyl-CoA: step 1/1. Functionally, component of the acetyl coenzyme A carboxylase (ACC) complex. Biotin carboxylase (BC) catalyzes the carboxylation of biotin on its carrier protein (BCCP) and then the CO(2) group is transferred by the transcarboxylase to acetyl-CoA to form malonyl-CoA. This is Acetyl-coenzyme A carboxylase carboxyl transferase subunit beta from Pseudomonas syringae pv. tomato (strain ATCC BAA-871 / DC3000).